The following is a 360-amino-acid chain: Peptide chain release factor 1 (360 aa).

Q235 carries the N5-methylglutamine modification.

The protein belongs to the prokaryotic/mitochondrial release factor family. Post-translationally, methylated by PrmC. Methylation increases the termination efficiency of RF1.

The protein localises to the cytoplasm. In terms of biological role, peptide chain release factor 1 directs the termination of translation in response to the peptide chain termination codons UAG and UAA. This is Peptide chain release factor 1 from Burkholderia pseudomallei (strain 1106a).